Here is a 209-residue protein sequence, read N- to C-terminus: Proteasome subunit beta (209 aa).

Residues 1–10 (MVEQSDTMKG) constitute a propeptide, removed in mature form; by autocatalysis. T11 (nucleophile) is an active-site residue.

The protein belongs to the peptidase T1B family. As to quaternary structure, the 20S proteasome core is composed of 14 alpha and 14 beta subunits that assemble into four stacked heptameric rings, resulting in a barrel-shaped structure. The two inner rings, each composed of seven catalytic beta subunits, are sandwiched by two outer rings, each composed of seven alpha subunits. The catalytic chamber with the active sites is on the inside of the barrel. Has a gated structure, the ends of the cylinder being occluded by the N-termini of the alpha-subunits. Is capped at one or both ends by the proteasome regulatory ATPase, PAN.

It localises to the cytoplasm. It carries out the reaction Cleavage of peptide bonds with very broad specificity.. Its activity is regulated as follows. The formation of the proteasomal ATPase PAN-20S proteasome complex, via the docking of the C-termini of PAN into the intersubunit pockets in the alpha-rings, triggers opening of the gate for substrate entry. Interconversion between the open-gate and close-gate conformations leads to a dynamic regulation of the 20S proteasome proteolysis activity. Functionally, component of the proteasome core, a large protease complex with broad specificity involved in protein degradation. This chain is Proteasome subunit beta, found in Methanospirillum hungatei JF-1 (strain ATCC 27890 / DSM 864 / NBRC 100397 / JF-1).